The sequence spans 158 residues: Transcription elongation factor GreA (158 aa).

It belongs to the GreA/GreB family.

In terms of biological role, necessary for efficient RNA polymerase transcription elongation past template-encoded arresting sites. The arresting sites in DNA have the property of trapping a certain fraction of elongating RNA polymerases that pass through, resulting in locked ternary complexes. Cleavage of the nascent transcript by cleavage factors such as GreA or GreB allows the resumption of elongation from the new 3'terminus. GreA releases sequences of 2 to 3 nucleotides. This chain is Transcription elongation factor GreA, found in Pelobacter propionicus (strain DSM 2379 / NBRC 103807 / OttBd1).